Reading from the N-terminus, the 446-residue chain is Zinc finger protein 19 (446 aa).

In terms of domain architecture, KRAB spans 2 to 73; sequence VTFEDVAVHF…EAQDDPPAET (72 aa). C2H2-type zinc fingers lie at residues 149-171, 177-199, 205-227, 233-255, 261-283, 289-311, 317-339, 345-367, and 373-395; these read FICEECGKSFSYFSYYARHQRIH, FECSECGKAFNGNSSLIRHQRIH, YQCEECGRAFNDNANLIRHQRIH, YYCTECGNSFTSSSEFVIHQRIH, YECNECGKAFVGNSPLLRHQKIH, YECNECGKSFGRTSHLSQHQRIH, YSCKVCGQAFNFHTKLTRHQRIH, FDCVDCGKAFSAQEQLKRHLRIH, and YVCDECGKAFTSKRNLHQHQRIH. The C2H2-type 10; degenerate zinc-finger motif lies at 401–423; sequence YEYSKYEKAFGTSSQLGHLEHVH.

Belongs to the krueppel C2H2-type zinc-finger protein family.

Its subcellular location is the nucleus. In terms of biological role, may be involved in transcriptional regulation. The sequence is that of Zinc finger protein 19 (ZNF19) from Pongo abelii (Sumatran orangutan).